The primary structure comprises 74 residues: Peptide Im-4 (74 aa).

The N-terminal stretch at 1-22 (MKFQYLLAIFMIVLVVTDHCQA) is a signal peptide. Lys-39 bears the Lysine amide; partial mark. A propeptide spanning residues 40–74 (GRRRRQLEARYEPQQRNFRKREIDFEKLFANMPDY) is cleaved from the precursor.

The protein belongs to the non-disulfide-bridged peptide (NDBP) superfamily. Short antimicrobial peptide (group 4) family. As to expression, expressed by the venom gland.

The protein localises to the secreted. The protein resides in the target cell membrane. Its function is as follows. Antimicrobial peptide that probably forms pores in target membranes. Has antibacterial activity against Gram-positive bacteria S.aureus NBRC 13276 (MIC=5-10 uM) and B.subtilis NBRC 3009 (MIC=2.5-5 uM) but not against Gram-negative bacterium E.coli NBRC 3972. The chain is Peptide Im-4 from Isometrus maculatus (Lesser brown scorpion).